The chain runs to 125 residues: Large ribosomal subunit protein bL12 (125 aa).

This sequence belongs to the bacterial ribosomal protein bL12 family. In terms of assembly, homodimer. Part of the ribosomal stalk of the 50S ribosomal subunit. Forms a multimeric L10(L12)X complex, where L10 forms an elongated spine to which 2 to 4 L12 dimers bind in a sequential fashion. Binds GTP-bound translation factors.

Functionally, forms part of the ribosomal stalk which helps the ribosome interact with GTP-bound translation factors. Is thus essential for accurate translation. The polypeptide is Large ribosomal subunit protein bL12 (Alkalilimnicola ehrlichii (strain ATCC BAA-1101 / DSM 17681 / MLHE-1)).